Here is a 93-residue protein sequence, read N- to C-terminus: uncharacterized protein (93 aa).

Residues 12–32 (VVGGLSFWTFSAGLIMIVNAL) traverse the membrane as a helical segment. A disordered region spans residues 47–66 (TANANGSDDDNENKNNSYRS).

It is found in the cell membrane. This is an uncharacterized protein from Mycoplasma genitalium (strain ATCC 33530 / DSM 19775 / NCTC 10195 / G37) (Mycoplasmoides genitalium).